We begin with the raw amino-acid sequence, 60 residues long: Small ribosomal subunit protein bS21 (60 aa).

The disordered stretch occupies residues Arg-35–Arg-60. The span at Val-43–Arg-60 shows a compositional bias: basic residues.

Belongs to the bacterial ribosomal protein bS21 family.

In Clostridium novyi (strain NT), this protein is Small ribosomal subunit protein bS21.